The chain runs to 1615 residues: Ferredoxin-dependent glutamate synthase, chloroplastic (1615 aa).

Residues 1–52 (MATLPRAAAAAAPSPAAALLPLPRAAPLLAGRAAARSAARRLRARGTRAPPL) constitute a chloroplast transit peptide. Cys-97 acts as the Nucleophile in catalysis. The Glutamine amidotransferase type-2 domain maps to 97 to 496 (CGVGFVANLK…PGMMITVDLQ (400 aa)). 1175–1232 (LSETHQTLIQNGLRERVVLRVDGGFRSGLDVLMAAAMGADEYGFGSVAMIATGCVMAR) is a binding site for FMN. The [3Fe-4S] cluster site is built by Cys-1228, Cys-1234, and Cys-1239.

The protein belongs to the glutamate synthase family. It depends on [3Fe-4S] cluster as a cofactor. FAD serves as cofactor. The cofactor is FMN. Expressed in leaf blades and at lower levels in roots.

It localises to the plastid. It is found in the chloroplast. The enzyme catalyses 2 oxidized [2Fe-2S]-[ferredoxin] + 2 L-glutamate = L-glutamine + 2 reduced [2Fe-2S]-[ferredoxin] + 2-oxoglutarate + 2 H(+). It functions in the pathway amino-acid biosynthesis; L-glutamate biosynthesis via GLT pathway; L-glutamate from 2-oxoglutarate and L-glutamine (ferredoxin route): step 1/1. It participates in energy metabolism; nitrogen metabolism. Its function is as follows. Involved in glutamate biosynthesis in leaf. Required for the reassimilation of ammonium ions generated during photorespiration. The sequence is that of Ferredoxin-dependent glutamate synthase, chloroplastic (GLU) from Oryza sativa subsp. japonica (Rice).